Here is a 231-residue protein sequence, read N- to C-terminus: Protein HHL1, chloroplastic (231 aa).

Residues 1 to 39 constitute a chloroplast transit peptide; it reads MEVSMSLNALTRLPLKNTGRFEEVGLARHSLFSSRTACR. The chain crosses the membrane as a helical span at residues 93–113; sequence YLWYPLSIIAGGTTAKIMVAA. The tract at residues 206–231 is disordered; that stretch reads SFGKLSSLNPGSDEKTEETSDEKAKA. The span at 217-231 shows a compositional bias: basic and acidic residues; that stretch reads SDEKTEETSDEKAKA.

As to quaternary structure, interacts with psbB, psbC and LQY1, but not with psbA or psbD.

The protein localises to the plastid. It localises to the chloroplast thylakoid membrane. In terms of biological role, involved in photoprotection. Forms a complex with LQY1 that is involved in the repair and reassembly cycle of the PSII-LHCII supercomplex under high-light conditions. May function in guiding the release of psbC from PSII core monomers. In Arabidopsis thaliana (Mouse-ear cress), this protein is Protein HHL1, chloroplastic.